A 232-amino-acid polypeptide reads, in one-letter code: tRNA (guanine-N(1)-)-methyltransferase (232 aa).

Gly116 serves as a coordination point for S-adenosyl-L-methionine.

Belongs to the RNA methyltransferase TrmD family. In terms of assembly, homodimer.

It is found in the cytoplasm. The catalysed reaction is guanosine(37) in tRNA + S-adenosyl-L-methionine = N(1)-methylguanosine(37) in tRNA + S-adenosyl-L-homocysteine + H(+). Functionally, specifically methylates guanosine-37 in various tRNAs. This chain is tRNA (guanine-N(1)-)-methyltransferase, found in Chlorobium luteolum (strain DSM 273 / BCRC 81028 / 2530) (Pelodictyon luteolum).